A 295-amino-acid chain; its full sequence is Bifunctional protein FolD (295 aa).

Residues 165–167 (GRS), Ser-190, and Ile-231 contribute to the NADP(+) site.

Belongs to the tetrahydrofolate dehydrogenase/cyclohydrolase family. Homodimer.

The enzyme catalyses (6R)-5,10-methylene-5,6,7,8-tetrahydrofolate + NADP(+) = (6R)-5,10-methenyltetrahydrofolate + NADPH. The catalysed reaction is (6R)-5,10-methenyltetrahydrofolate + H2O = (6R)-10-formyltetrahydrofolate + H(+). The protein operates within one-carbon metabolism; tetrahydrofolate interconversion. Functionally, catalyzes the oxidation of 5,10-methylenetetrahydrofolate to 5,10-methenyltetrahydrofolate and then the hydrolysis of 5,10-methenyltetrahydrofolate to 10-formyltetrahydrofolate. The chain is Bifunctional protein FolD from Nitrosomonas europaea (strain ATCC 19718 / CIP 103999 / KCTC 2705 / NBRC 14298).